We begin with the raw amino-acid sequence, 221 residues long: Fructokinase (221 aa).

This sequence belongs to the carbohydrate kinase PfkB family.

The enzyme catalyses D-fructose + ATP = D-fructose 6-phosphate + ADP + H(+). The chain is Fructokinase (scrK) from Salmonella thompson.